The sequence spans 570 residues: Dihydroxy-acid dehydratase (570 aa).

Residues 1–25 (MSQQDSPANADHRRRHSSIVVDGPG) are disordered. A [2Fe-2S] cluster-binding site is contributed by C60. D92 serves as a coordination point for Mg(2+). Residue C133 participates in [2Fe-2S] cluster binding. The Mg(2+) site is built by D134 and K135. N6-carboxylysine is present on K135. A [2Fe-2S] cluster-binding site is contributed by C202. E453 contributes to the Mg(2+) binding site. The active-site Proton acceptor is S479.

The protein belongs to the IlvD/Edd family. As to quaternary structure, homodimer. [2Fe-2S] cluster is required as a cofactor. Mg(2+) serves as cofactor.

It carries out the reaction (2R)-2,3-dihydroxy-3-methylbutanoate = 3-methyl-2-oxobutanoate + H2O. It catalyses the reaction (2R,3R)-2,3-dihydroxy-3-methylpentanoate = (S)-3-methyl-2-oxopentanoate + H2O. The protein operates within amino-acid biosynthesis; L-isoleucine biosynthesis; L-isoleucine from 2-oxobutanoate: step 3/4. It participates in amino-acid biosynthesis; L-valine biosynthesis; L-valine from pyruvate: step 3/4. Functionally, functions in the biosynthesis of branched-chain amino acids. Catalyzes the dehydration of (2R,3R)-2,3-dihydroxy-3-methylpentanoate (2,3-dihydroxy-3-methylvalerate) into 2-oxo-3-methylpentanoate (2-oxo-3-methylvalerate) and of (2R)-2,3-dihydroxy-3-methylbutanoate (2,3-dihydroxyisovalerate) into 2-oxo-3-methylbutanoate (2-oxoisovalerate), the penultimate precursor to L-isoleucine and L-valine, respectively. This chain is Dihydroxy-acid dehydratase, found in Chromohalobacter salexigens (strain ATCC BAA-138 / DSM 3043 / CIP 106854 / NCIMB 13768 / 1H11).